A 688-amino-acid chain; its full sequence is Glycine--tRNA ligase beta subunit (688 aa).

It belongs to the class-II aminoacyl-tRNA synthetase family. As to quaternary structure, tetramer of two alpha and two beta subunits.

The protein localises to the cytoplasm. It carries out the reaction tRNA(Gly) + glycine + ATP = glycyl-tRNA(Gly) + AMP + diphosphate. The protein is Glycine--tRNA ligase beta subunit of Listeria welshimeri serovar 6b (strain ATCC 35897 / DSM 20650 / CCUG 15529 / CIP 8149 / NCTC 11857 / SLCC 5334 / V8).